The primary structure comprises 277 residues: Large ribosomal subunit protein uL2 (277 aa).

A disordered region spans residues 220 to 277 (VRGSVMNPNDHPHGGGEGKAPIGRPSPMSPWGKKTLGKKTRSSKARSEKLIIRHRKSR). Residues 254–263 (TLGKKTRSSK) are compositionally biased toward basic residues.

It belongs to the universal ribosomal protein uL2 family. As to quaternary structure, part of the 50S ribosomal subunit. Forms a bridge to the 30S subunit in the 70S ribosome.

One of the primary rRNA binding proteins. Required for association of the 30S and 50S subunits to form the 70S ribosome, for tRNA binding and peptide bond formation. It has been suggested to have peptidyltransferase activity; this is somewhat controversial. Makes several contacts with the 16S rRNA in the 70S ribosome. This is Large ribosomal subunit protein uL2 from Latilactobacillus sakei subsp. sakei (strain 23K) (Lactobacillus sakei subsp. sakei).